A 116-amino-acid chain; its full sequence is Putative iron-sulfur cluster insertion protein ErpA (116 aa).

Residues Cys-44, Cys-108, and Cys-110 each coordinate iron-sulfur cluster.

It belongs to the HesB/IscA family. As to quaternary structure, homodimer. The cofactor is iron-sulfur cluster.

Functionally, required for insertion of 4Fe-4S clusters. The chain is Putative iron-sulfur cluster insertion protein ErpA from Janthinobacterium sp. (strain Marseille) (Minibacterium massiliensis).